Consider the following 258-residue polypeptide: Phosphate import ATP-binding protein PstB (258 aa).

The ABC transporter domain maps to 5-247 (IDVSGLTAYY…SQIFSNPKEK (243 aa)). An ATP-binding site is contributed by 37-44 (GPSGCGKS).

This sequence belongs to the ABC transporter superfamily. Phosphate importer (TC 3.A.1.7) family. In terms of assembly, the complex is composed of two ATP-binding proteins (PstB), two transmembrane proteins (PstC and PstA) and a solute-binding protein (PstS).

It localises to the cell membrane. It catalyses the reaction phosphate(out) + ATP + H2O = ADP + 2 phosphate(in) + H(+). In terms of biological role, part of the ABC transporter complex PstSACB involved in phosphate import. Responsible for energy coupling to the transport system. This chain is Phosphate import ATP-binding protein PstB, found in Frankia casuarinae (strain DSM 45818 / CECT 9043 / HFP020203 / CcI3).